We begin with the raw amino-acid sequence, 171 residues long: S-ribosylhomocysteine lyase (171 aa).

Residues histidine 54, histidine 58, and cysteine 128 each coordinate Fe cation.

It belongs to the LuxS family. As to quaternary structure, homodimer. Fe cation serves as cofactor.

The catalysed reaction is S-(5-deoxy-D-ribos-5-yl)-L-homocysteine = (S)-4,5-dihydroxypentane-2,3-dione + L-homocysteine. Its function is as follows. Involved in the synthesis of autoinducer 2 (AI-2) which is secreted by bacteria and is used to communicate both the cell density and the metabolic potential of the environment. The regulation of gene expression in response to changes in cell density is called quorum sensing. Catalyzes the transformation of S-ribosylhomocysteine (RHC) to homocysteine (HC) and 4,5-dihydroxy-2,3-pentadione (DPD). The chain is S-ribosylhomocysteine lyase from Yersinia pseudotuberculosis serotype O:1b (strain IP 31758).